The following is a 221-amino-acid chain: GDP-perosamine N-acetyltransferase (221 aa).

The active-site Proton acceptor is the histidine 139.

Belongs to the transferase hexapeptide repeat family. In terms of assembly, homotrimer.

It carries out the reaction GDP-alpha-D-perosamine + acetyl-CoA = GDP-N-acetyl-alpha-D-perosamine + CoA + H(+). It functions in the pathway bacterial outer membrane biogenesis; LPS O-antigen biosynthesis. Its function is as follows. Catalyzes the transfer of an acetyl residue from acetyl-CoA onto GDP-perosamine to form GDP-N-acetyl-perosamine. The chain is GDP-perosamine N-acetyltransferase from Escherichia coli O157:H7.